We begin with the raw amino-acid sequence, 95 residues long: UPF0125 protein BUsg_244 (95 aa).

It belongs to the UPF0125 (RnfH) family.

The polypeptide is UPF0125 protein BUsg_244 (Buchnera aphidicola subsp. Schizaphis graminum (strain Sg)).